Here is a 169-residue protein sequence, read N- to C-terminus: uncharacterized protein (169 aa).

This is an uncharacterized protein from Mycoplasma genitalium (strain ATCC 33530 / DSM 19775 / NCTC 10195 / G37) (Mycoplasmoides genitalium).